Reading from the N-terminus, the 462-residue chain is beta-Tubulin at 65B (462 aa).

GTP contacts are provided by E70, S137, G141, T142, G143, N203, and N225. E70 provides a ligand contact to Mg(2+). Positions 420 to 462 are disordered; it reads DYRSSAEGEDSGGGGGGGGGRSGSAESGEEEATPEAHCQYCTE. Over residues 430 to 441 the composition is skewed to gly residues; the sequence is SGGGGGGGGGRS.

Belongs to the tubulin family. In terms of assembly, dimer of alpha and beta chains. A typical microtubule is a hollow water-filled tube with an outer diameter of 25 nm and an inner diameter of 15 nM. Alpha-beta heterodimers associate head-to-tail to form protofilaments running lengthwise along the microtubule wall with the beta-tubulin subunit facing the microtubule plus end conferring a structural polarity. Microtubules usually have 13 protofilaments but different protofilament numbers can be found in some organisms and specialized cells. Mg(2+) serves as cofactor.

The protein localises to the cytoplasm. It localises to the cytoskeleton. Functionally, tubulin is the major constituent of microtubules, a cylinder consisting of laterally associated linear protofilaments composed of alpha- and beta-tubulin heterodimers. Microtubules grow by the addition of GTP-tubulin dimers to the microtubule end, where a stabilizing cap forms. Below the cap, tubulin dimers are in GDP-bound state, owing to GTPase activity of alpha-tubulin. This is beta-Tubulin at 65B from Drosophila melanogaster (Fruit fly).